We begin with the raw amino-acid sequence, 131 residues long: Arsenate reductase (131 aa).

Active-site nucleophile residues include cysteine 10, cysteine 82, and cysteine 89. 2 disulfides stabilise this stretch: cysteine 10–cysteine 82 and cysteine 82–cysteine 89.

It belongs to the low molecular weight phosphotyrosine protein phosphatase family. Thioredoxin-coupled ArsC subfamily.

Its subcellular location is the cytoplasm. It carries out the reaction arsenate + [thioredoxin]-dithiol + H(+) = arsenite + [thioredoxin]-disulfide + H2O. In terms of biological role, catalyzes the reduction of arsenate [As(V)] to arsenite [As(III)]. The sequence is that of Arsenate reductase from Staphylococcus xylosus.